Reading from the N-terminus, the 1077-residue chain is RNA polymerase-associated protein CTR9 (1077 aa).

TPR repeat units lie at residues 56-89 (KEHW…FQNS), 138-174 (IGNM…EDHR), 183-216 (CLFL…NPVL), 218-251 (PDPR…NPKN), 298-332 (PVLL…SPMI), 338-371 (SESS…NEDN), 373-405 (LAKL…NESL), 421-455 (FDAK…TLAT), 462-495 (SRAY…MEFI), 501-534 (LEVL…VSDK), 540-572 (ITLE…HPAY), 664-697 (GKKS…DPFN), 699-731 (FAAQ…LDNE), 732-764 (DVQL…FDNE), 768-801 (PHIL…AKTA), and 830-863 (AETL…FREL). A compositionally biased stretch (basic and acidic residues) spans 959-980 (EREAMAISEHNVKDDSDLSDKD). The segment at 959 to 1077 (EREAMAISEH…NDNDDNDGLF (119 aa)) is disordered. Residues Ser-1015 and Ser-1017 each carry the phosphoserine modification. Composition is skewed to acidic residues over residues 1042-1051 (FIEDSDEEEA) and 1063-1077 (DNDE…DGLF).

Component of the PAF1 complex which consists of at least CDC73, CTR9, LEO1, PAF1 and RTF1. Interacts with SPT6. Interacts with FACT subunits POB3 and SPT16.

Its subcellular location is the nucleus. It is found in the nucleoplasm. Its function is as follows. The PAF1 complex is a multifunctional complex. Involved in transcription initiation via genetic interactions with TATA-binding proteins. Involved in elongation. It regulates 3'-end formation of snR47 by modulating the recruitment or stable association of NRD1 and NAB3 with RNA polymerase II. Also has a role in transcription-coupled histone modification. Required for activation of RAD6 ubiquitin conjugate and the BRE1 ubiquitin ligase which ubiquitinate 'Lys-126' histone H2B. Activates the SET1 histone methyltransferase complex for methylation of 'Lys-4' of histone H3 and for methylation of 'Lys-73' of histone H3 by DOT1 and 'Lys-36' of histone H3 by SET2. In complex with PAF1, required for normal CLN1 and CLN2 G1 cyclin expression in late G1. Also has a role in chromosome segregation where it appears to be involved in microtubule placement. This Saccharomyces cerevisiae (strain ATCC 204508 / S288c) (Baker's yeast) protein is RNA polymerase-associated protein CTR9 (CTR9).